Reading from the N-terminus, the 93-residue chain is Acyl carrier protein AcpXL (93 aa).

Residues S2 to V88 enclose the Carrier domain. S37 is subject to O-(pantetheine 4'-phosphoryl)serine.

Post-translationally, 4'-phosphopantetheine is transferred from CoA to a specific serine of apo-ACP by AcpS. This modification is essential for activity because fatty acids are bound in thioester linkage to the sulfhydryl of the prosthetic group.

The protein localises to the cytoplasm. The protein operates within glycolipid biosynthesis; KDO(2)-lipid A biosynthesis. Its function is as follows. Carrier of the growing fatty acid chain in fatty acid biosynthesis. Is involved in the transfer of long hydroxylated fatty acids to lipid A. The chain is Acyl carrier protein AcpXL (acpXL) from Brucella melitensis biotype 1 (strain ATCC 23456 / CCUG 17765 / NCTC 10094 / 16M).